Here is a 624-residue protein sequence, read N- to C-terminus: Ubiquitin carboxyl-terminal hydrolase 16 (624 aa).

The 575-residue stretch at 46 to 620 folds into the USP domain; sequence VGLSNPANDC…EVYLLFYEIE (575 aa). The active-site Nucleophile is the Cys-55. Catalysis depends on His-424, which acts as the Proton acceptor. The tract at residues 453–573 is disordered; the sequence is SENPSRVASP…ATDTEASASA (121 aa). Positions 479–496 are enriched in low complexity; the sequence is SPPASTSTNSPLSLTPDS. A compositionally biased stretch (polar residues) spans 518 to 544; sequence VSFQSTHSSSKQTISPTSAARNSSSLD. The segment covering 546–573 has biased composition (low complexity); sequence ARLSSPASRSSLAERNASATDTEASASA.

The protein belongs to the peptidase C19 family.

The enzyme catalyses Thiol-dependent hydrolysis of ester, thioester, amide, peptide and isopeptide bonds formed by the C-terminal Gly of ubiquitin (a 76-residue protein attached to proteins as an intracellular targeting signal).. The chain is Ubiquitin carboxyl-terminal hydrolase 16 (ubp16) from Emericella nidulans (strain FGSC A4 / ATCC 38163 / CBS 112.46 / NRRL 194 / M139) (Aspergillus nidulans).